The sequence spans 232 residues: Ribonuclease 3 (232 aa).

The region spanning 10–135 (ALKIYEATGY…LIGAMYMDGG (126 aa)) is the RNase III domain. E48 is a binding site for Mg(2+). Residue D52 is part of the active site. Positions 121 and 124 each coordinate Mg(2+). E124 is a catalytic residue. One can recognise a DRBM domain in the interval 161–230 (DPKTALQEWV…AKLMLKKITE (70 aa)).

It belongs to the ribonuclease III family. Homodimer. It depends on Mg(2+) as a cofactor.

The protein resides in the cytoplasm. The catalysed reaction is Endonucleolytic cleavage to 5'-phosphomonoester.. Its function is as follows. Digests double-stranded RNA. Involved in the processing of primary rRNA transcript to yield the immediate precursors to the large and small rRNAs (23S and 16S). Processes some mRNAs, and tRNAs when they are encoded in the rRNA operon. Processes pre-crRNA and tracrRNA of type II CRISPR loci if present in the organism. The chain is Ribonuclease 3 from Anaplasma marginale (strain Florida).